Reading from the N-terminus, the 284-residue chain is Tropomyosin (284 aa).

Residues 1–284 (MDSIKKKMMA…DTTFAELTSF (284 aa)) are a coiled coil. The disordered stretch occupies residues 97 to 140 (EDFEQSSGRLTETSTKLDDASKAAEESERNRKTLETRSISDDER). The segment covering 101-110 (QSSGRLTETS) has biased composition (polar residues). A compositionally biased stretch (basic and acidic residues) spans 111-140 (TKLDDASKAAEESERNRKTLETRSISDDER).

This sequence belongs to the tropomyosin family. As to quaternary structure, homodimer.

Tropomyosin, in association with the troponin complex, plays a central role in the calcium dependent regulation of muscle contraction. This Echinococcus multilocularis (Fox tapeworm) protein is Tropomyosin.